The sequence spans 151 residues: Phosphoribosyl-AMP cyclohydrolase (151 aa).

D94 lines the Mg(2+) pocket. C95 serves as a coordination point for Zn(2+). Positions 96 and 98 each coordinate Mg(2+). Zn(2+)-binding residues include C112 and C119.

The protein belongs to the PRA-CH family. As to quaternary structure, homodimer. Mg(2+) is required as a cofactor. The cofactor is Zn(2+).

It is found in the cytoplasm. The enzyme catalyses 1-(5-phospho-beta-D-ribosyl)-5'-AMP + H2O = 1-(5-phospho-beta-D-ribosyl)-5-[(5-phospho-beta-D-ribosylamino)methylideneamino]imidazole-4-carboxamide. It functions in the pathway amino-acid biosynthesis; L-histidine biosynthesis; L-histidine from 5-phospho-alpha-D-ribose 1-diphosphate: step 3/9. Catalyzes the hydrolysis of the adenine ring of phosphoribosyl-AMP. The chain is Phosphoribosyl-AMP cyclohydrolase from Rhodopseudomonas palustris (strain TIE-1).